The chain runs to 160 residues: Putative 4-hydroxy-4-methyl-2-oxoglutarate aldolase (160 aa).

Residues 75–78 and Arg97 contribute to the substrate site; that span reads GDQL. Asp98 serves as a coordination point for a divalent metal cation.

The protein belongs to the class II aldolase/RraA-like family. Homotrimer. A divalent metal cation is required as a cofactor.

It carries out the reaction 4-hydroxy-4-methyl-2-oxoglutarate = 2 pyruvate. It catalyses the reaction oxaloacetate + H(+) = pyruvate + CO2. In terms of biological role, catalyzes the aldol cleavage of 4-hydroxy-4-methyl-2-oxoglutarate (HMG) into 2 molecules of pyruvate. Also contains a secondary oxaloacetate (OAA) decarboxylase activity due to the common pyruvate enolate transition state formed following C-C bond cleavage in the retro-aldol and decarboxylation reactions. This is Putative 4-hydroxy-4-methyl-2-oxoglutarate aldolase from Vibrio vulnificus (strain YJ016).